Reading from the N-terminus, the 226-residue chain is ATP synthase F(0) complex subunit a (226 aa).

6 consecutive transmembrane segments (helical) span residues 12–32 (PTVLGLPAAVLVILFPPLLIP), 68–88 (WSLMLTSLIIFIASTNLLGLL), 97–117 (QLSMNLAMAIPLWASTVAMGL), 138–158 (IPMLIIIETVSLFIQPLALAV), 182–202 (LAINLPLTLITLTILTLLTIL), and 203–223 (ETAIALIQAYVFTLLVSLYLH).

It belongs to the ATPase A chain family. As to quaternary structure, component of the ATP synthase complex composed at least of ATP5F1A/subunit alpha, ATP5F1B/subunit beta, ATP5MC1/subunit c (homooctomer), MT-ATP6/subunit a, MT-ATP8/subunit 8, ATP5ME/subunit e, ATP5MF/subunit f, ATP5MG/subunit g, ATP5MK/subunit k, ATP5MJ/subunit j, ATP5F1C/subunit gamma, ATP5F1D/subunit delta, ATP5F1E/subunit epsilon, ATP5PF/subunit F6, ATP5PB/subunit b, ATP5PD/subunit d, ATP5PO/subunit OSCP. ATP synthase complex consists of a soluble F(1) head domain (subunits alpha(3) and beta(3)) - the catalytic core - and a membrane F(0) domain - the membrane proton channel (subunits c, a, 8, e, f, g, k and j). These two domains are linked by a central stalk (subunits gamma, delta, and epsilon) rotating inside the F1 region and a stationary peripheral stalk (subunits F6, b, d, and OSCP). Interacts with DNAJC30; interaction is direct.

It is found in the mitochondrion inner membrane. The catalysed reaction is H(+)(in) = H(+)(out). Its function is as follows. Subunit a, of the mitochondrial membrane ATP synthase complex (F(1)F(0) ATP synthase or Complex V) that produces ATP from ADP in the presence of a proton gradient across the membrane which is generated by electron transport complexes of the respiratory chain. ATP synthase complex consist of a soluble F(1) head domain - the catalytic core - and a membrane F(1) domain - the membrane proton channel. These two domains are linked by a central stalk rotating inside the F(1) region and a stationary peripheral stalk. During catalysis, ATP synthesis in the catalytic domain of F(1) is coupled via a rotary mechanism of the central stalk subunits to proton translocation. With the subunit c (ATP5MC1), forms the proton-conducting channel in the F(0) domain, that contains two crucial half-channels (inlet and outlet) that facilitate proton movement from the mitochondrial intermembrane space (IMS) into the matrix. Protons are taken up via the inlet half-channel and released through the outlet half-channel, following a Grotthuss mechanism. This chain is ATP synthase F(0) complex subunit a, found in Pongo abelii (Sumatran orangutan).